Consider the following 119-residue polypeptide: uncharacterized protein (119 aa).

This is an uncharacterized protein from Aquifex aeolicus (strain VF5).